A 347-amino-acid polypeptide reads, in one-letter code: Phosphate acyltransferase (347 aa).

This sequence belongs to the PlsX family. As to quaternary structure, homodimer. Probably interacts with PlsY.

Its subcellular location is the cytoplasm. The catalysed reaction is a fatty acyl-[ACP] + phosphate = an acyl phosphate + holo-[ACP]. It participates in lipid metabolism; phospholipid metabolism. Catalyzes the reversible formation of acyl-phosphate (acyl-PO(4)) from acyl-[acyl-carrier-protein] (acyl-ACP). This enzyme utilizes acyl-ACP as fatty acyl donor, but not acyl-CoA. The protein is Phosphate acyltransferase of Sinorhizobium medicae (strain WSM419) (Ensifer medicae).